A 410-amino-acid polypeptide reads, in one-letter code: Dipeptidase ataJ (410 aa).

Zn(2+)-binding residues include His27, Asp29, and Glu138. His165 is a substrate binding site. Residues 180–200 (TSSPWSEYGGQTHDPGDEPSR) are disordered. Arg258 and Asp318 together coordinate substrate.

Belongs to the metallo-dependent hydrolases superfamily. Peptidase M19 family. Zn(2+) is required as a cofactor.

The catalysed reaction is an L-aminoacyl-L-amino acid + H2O = 2 an L-alpha-amino acid. It participates in mycotoxin biosynthesis. Functionally, dipeptidase; part of the gene cluster that mediates the biosynthesis of acetylaranotin, a member of the epipolythiodioxopiperazine (ETP) class of toxins characterized by a disulfide-bridged cyclic dipeptide. The first step of acetylaranotin biosynthesis is performed by the NRPS ataP which produces diketopiperazine cyclo-L-Phe-L-Phe via the condensation of 2 phenylalanines (L-Phe). The ataC domain of ataTC then catalyzes the formation of bishydroxylation of cyclo-L-Phe-L-Phe. The glutathione S-transferase domain ataG in ataIMG further catalyzes the conjugation of two glutathiones to the bishydroxylated intermediate. Next, the dipeptidase ataJ removes the Glu residues. The following step is performed by the carbon sulfur lyase domain ataI of ataIMG which may convert the bis-cysteinyl adduct to yield an epidithiol intermediate. The ataT domain from ataTC then catalyzes the oxidation of the free dithiols, followed by a cyclization step catalyzed by the cytochrome P450 ataF. AtaF probably acts as an epoxidase to promote a dual epoxidation formation at C8 and C9 along with C8' and C9', followed by the spontaneous nucleophilic attack of the amide nitrogens N10 and N10' to yield an intermediate with the pyrrolidine partial structure. The final steps of acetylaranotin biosynthesis involve the acetylation and ring rearrangement of an epitetrathiodiketopiperazine intermediate to produce acetylaranotin. AtaH probably catalyzes the acetylation of epitetrathiodiketopiperazine to produce a diacetate and ataY is responsible for the formation of the dihydrooxepin moiety that converts the diacetate intermediate to acetylaranotin via acetylapoaranotin. Both enzymes could function independently in the absence of the other. The acetylaranotin bis-thiomethyltransferase ataS located outside of acetylaranotin gene cluster is the main thiomethyltransferase responsible for converting acetylaranotin and its related intermediates to their methylated forms. The protein is Dipeptidase ataJ of Aspergillus terreus (strain NIH 2624 / FGSC A1156).